We begin with the raw amino-acid sequence, 194 residues long: Peptidyl-tRNA hydrolase (194 aa).

Tyrosine 17 provides a ligand contact to tRNA. Catalysis depends on histidine 22, which acts as the Proton acceptor. TRNA is bound by residues tyrosine 68, asparagine 70, and asparagine 116.

Belongs to the PTH family. As to quaternary structure, monomer.

The protein resides in the cytoplasm. It carries out the reaction an N-acyl-L-alpha-aminoacyl-tRNA + H2O = an N-acyl-L-amino acid + a tRNA + H(+). Its function is as follows. Hydrolyzes ribosome-free peptidyl-tRNAs (with 1 or more amino acids incorporated), which drop off the ribosome during protein synthesis, or as a result of ribosome stalling. In terms of biological role, catalyzes the release of premature peptidyl moieties from peptidyl-tRNA molecules trapped in stalled 50S ribosomal subunits, and thus maintains levels of free tRNAs and 50S ribosomes. The sequence is that of Peptidyl-tRNA hydrolase from Pseudomonas syringae pv. syringae (strain B728a).